We begin with the raw amino-acid sequence, 192 residues long: Virion infectivity factor (192 aa).

The interaction with host APOBEC3F; F1-box stretch occupies residues 14–17; sequence DRMR. The tract at residues 40–44 is interaction with host APOBEC3G; G-box; it reads YRHHF. An interaction with host APOBEC3F and APOBEC3G; FG-box region spans residues 54 to 72; that stretch reads EVHIPLETAELVITTYWGL. An interaction with host APOBEC3F; F2-box region spans residues 74 to 79; the sequence is PGEREW. Residues 75-114 are RNA-binding; it reads GEREWHLGQGVSIEWRQGRYRTQIDPGLADQLIHIYYFDC. The residue at position 96 (Thr96) is a Phosphothreonine; by host MAP4K1. Residues His108, Cys114, Cys133, and His139 each coordinate Zn(2+). The HCCH motif motif lies at 108–139; sequence HIYYFDCFSESAIRKAILGHKISPRCNYQAGH. Residue Ser144 is modified to Phosphoserine; by host. The short motif at 144–153 is the BC-box-like motif element; that stretch reads SLQYLALTAL. Residues 151–164 are multimerization; sequence TALIAPKKTKPPLP. The SOCS box-like stretch occupies residues 151-180; it reads TALIAPKKTKPPLPSVQKLVEDRWNKPQKT. The interval 164-192 is disordered; sequence PSVQKLVEDRWNKPQKTRGHRESHTMNGH. Ser165 carries the post-translational modification Phosphoserine; by host MAP4K1. Residues 171 to 172 form a membrane association region; the sequence is ED. Residues 183–192 show a composition bias toward basic and acidic residues; it reads HRESHTMNGH. A Phosphothreonine; by host modification is found at Thr188.

Belongs to the primate lentivirus group Vif protein family. As to quaternary structure, homomultimer; in vitro and presumably in vivo. Interacts with viral RNA and Pr55Gag precursor; these interactions mediate Vif incorporation into the virion. Interacts with the viral reverse transcriptase. Forms cullin-5-RING E3 ubiquitin-protein ligase complex (ECS complex) by interacting with host CUL5, RBX2, elongin BC complex (ELOB and ELOC) and CBFB/CBF-beta. Within the ECS complex, Vif interacts directly with host CUL5, ELOC and APOBEC (APOBEC3F and APOBEC3G) substrates. The ECS complex also contains some single-stranded RNA (ssRNA) that acts as a glue that bridges Vif with APOBEC (APOBEC3F and APOBEC3G) substrates. Interacts with host UBCE7IP1 isoform 3/ZIN and possibly with SAT. Interacts with host tyrosine kinases HCK and FYN; these interactions may decrease level of phosphorylated APOBEC3G incorporation into virions. Interacts with host ABCE1; this interaction may play a role in protecting viral RNA from damage during viral assembly. Interacts with host MDM2; this interaction targets Vif for degradation by the proteasome. In terms of processing, processed in virion by the viral protease. Highly phosphorylated on serine and threonine residues. Post-translationally, polyubiquitinated and degraded by the proteasome in the presence of APOBEC3G.

The protein localises to the host cytoplasm. It is found in the host cell membrane. It localises to the virion. Counteracts the innate antiviral activity of host APOBEC3F and APOBEC3G by promoting their ubiquitination and degradation. Acts as a substrate recognition component of an E3 ubiquitin-protein ligase complex: mechanistically, Vif hijacks a host cullin-5-RING E3 ubiquitin-protein ligase complex (ECS complex) and the transcription coactivator CBFB/CBF-beta to form an active E3 ubiquitin-protein ligase complex that targets APOBEC3G and APOBEC3F for polyubiquitination, leading to their degradation by the proteasome. Vif interaction with APOBEC3G also blocks its cytidine deaminase activity in a proteasome-independent manner, suggesting a dual inhibitory mechanism. May interact directly with APOBEC3G mRNA in order to inhibit its translation. Association with CBFB/CBF-beta also inhibits the transcription coactivator activity of CBFB/CBF-beta. Seems to play a role in viral morphology by affecting the stability of the viral nucleoprotein core. Finally, Vif also contributes to the G2 cell cycle arrest observed in HIV infected cells. The polypeptide is Virion infectivity factor (Homo sapiens (Human)).